We begin with the raw amino-acid sequence, 648 residues long: Threonine--tRNA ligase (648 aa).

The TGS domain maps to 1 to 61 (MIKITLPDGS…TTDGSLVLYT (61 aa)). Positions 240 to 539 (DHRKLGKELE…LLEHTAGNFP (300 aa)) are catalytic. Zn(2+) is bound by residues Cys335, His386, and His516.

This sequence belongs to the class-II aminoacyl-tRNA synthetase family. As to quaternary structure, homodimer. Requires Zn(2+) as cofactor.

Its subcellular location is the cytoplasm. The enzyme catalyses tRNA(Thr) + L-threonine + ATP = L-threonyl-tRNA(Thr) + AMP + diphosphate + H(+). In terms of biological role, catalyzes the attachment of threonine to tRNA(Thr) in a two-step reaction: L-threonine is first activated by ATP to form Thr-AMP and then transferred to the acceptor end of tRNA(Thr). Also edits incorrectly charged L-seryl-tRNA(Thr). In Flavobacterium psychrophilum (strain ATCC 49511 / DSM 21280 / CIP 103535 / JIP02/86), this protein is Threonine--tRNA ligase.